Reading from the N-terminus, the 198-residue chain is Elongation factor Ts (198 aa).

Positions 81-84 (TDFV) are involved in Mg(2+) ion dislocation from EF-Tu.

This sequence belongs to the EF-Ts family.

The protein localises to the cytoplasm. Its function is as follows. Associates with the EF-Tu.GDP complex and induces the exchange of GDP to GTP. It remains bound to the aminoacyl-tRNA.EF-Tu.GTP complex up to the GTP hydrolysis stage on the ribosome. In Pseudothermotoga lettingae (strain ATCC BAA-301 / DSM 14385 / NBRC 107922 / TMO) (Thermotoga lettingae), this protein is Elongation factor Ts.